Reading from the N-terminus, the 815-residue chain is Probable E3 ubiquitin-protein ligase hulA (815 aa).

The C2 domain maps to 1–112 (MGSNLPSQPN…EMGGDEMLTR (112 aa)). Disordered regions lie at residues 134–237 (NLST…GWER) and 253–353 (RTTT…YFVD). Composition is skewed to low complexity over residues 165 to 185 (ASAAHPAASPAPIDPAASNPS) and 202 to 212 (APGAAAGATPT). 2 stretches are compositionally biased toward polar residues: residues 213–226 (NTQGSRTNLSSFED) and 253–270 (RTTTWTRPSSNYNEQTQR). The WW 1 domain occupies 229-262 (GRLPAGWERREDNLGRTYYVDHNTRTTTWTRPSS). The segment covering 279-294 (LERRAHQSRMLPEDRT) has biased composition (basic and acidic residues). The span at 295–308 (GANSPNLPETSQQA) shows a compositional bias: polar residues. Positions 324–333 (ATGATTAGTG) are enriched in low complexity. WW domains follow at residues 333-366 (GELPPGWEQRTTPEGRPYFVDHNTRTTTWVDPRR) and 393-426 (GPLPSGWEMRLTNTARVYFVDHNTKTTTWDDPRL). The HECT domain maps to 482–815 (SASDLKKRLM…VEETLGFGQE (334 aa)). Catalysis depends on C783, which acts as the Glycyl thioester intermediate.

The protein belongs to the RSP5/NEDD4 family. As to quaternary structure, interacts with creD.

It localises to the cytoplasm. It carries out the reaction S-ubiquitinyl-[E2 ubiquitin-conjugating enzyme]-L-cysteine + [acceptor protein]-L-lysine = [E2 ubiquitin-conjugating enzyme]-L-cysteine + N(6)-ubiquitinyl-[acceptor protein]-L-lysine.. The protein operates within protein modification; protein ubiquitination. Its function is as follows. E3 ubiquitin-protein ligase which accepts ubiquitin from an E2 ubiquitin-conjugating enzyme in the form of a thioester and then directly transfers the ubiquitin to targeted substrates. Probably involved in the regulatory network controlling carbon source utilization. In Aspergillus clavatus (strain ATCC 1007 / CBS 513.65 / DSM 816 / NCTC 3887 / NRRL 1 / QM 1276 / 107), this protein is Probable E3 ubiquitin-protein ligase hulA (hulA).